Consider the following 766-residue polypeptide: Hypoxia-inducible factor 1-alpha (766 aa).

Residues 1–26 (MDTGVVPEKKSRVSSDRRKEKSRDAA) form a disordered region. Residues 7-26 (PEKKSRVSSDRRKEKSRDAA) are compositionally biased toward basic and acidic residues. Residues 17–70 (RRKEKSRDAARCRRGKESEVFYELAQELPLPHSVTSNLDKASIMRLAISYLHMR) form the bHLH domain. PAS domains lie at 82–159 (EERE…TSKK) and 230–300 (PHPS…FAKG). Residues 304–347 (TGQYRMLAKRGGFVWVETQATVIYNNKNSQPQCVVCVNYVLSGI) form the PAC domain. Positions 361–383 (DMRPVKKELEEEESSEPEVSPVL) are disordered. At Pro426 the chain carries 4-hydroxyproline. Positions 475–509 (DQHLVPNTSVDTTEVSTGPDSSSTPGSHSFTEPDS) are disordered. The segment covering 479–489 (VPNTSVDTTEV) has biased composition (polar residues). Positions 490 to 503 (STGPDSSSTPGSHS) are enriched in low complexity. Residue Pro559 is modified to 4-hydroxyproline. The short motif at 718–721 (LLGI) is the Nuclear localization signal element. The residue at position 743 (Asn743) is a (3S)-3-hydroxyasparagine.

In terms of assembly, efficient DNA binding requires heterodimerization of an alpha and a beta/ARNT subunit. In normoxia, is hydroxylated on Pro-426 and Pro-559. The hydroxylated prolines promote interaction with VHL, initiating rapid ubiquitination and subsequent proteasomal degradation. Under hypoxia, proline hydroxylation is impaired and ubiquitination is attenuated, resulting in stabilization. Post-translationally, in normoxia, is hydroxylated on Asn-743, thus abrogating interaction with CREBBP and EP300 and preventing transcriptional activation. In terms of processing, the iron and 2-oxoglutarate dependent 3-hydroxylation of asparagine is (S) stereospecific within HIF CTAD domains.

It localises to the cytoplasm. It is found in the nucleus. The protein localises to the nucleus speckle. Its activity is regulated as follows. Induced by reactive oxygen species (ROS). In terms of biological role, functions as a master transcriptional regulator of the adaptive response to hypoxia. Under hypoxic conditions, activates the transcription of over 40 genes, including erythropoietin, glucose transporters, glycolytic enzymes, vascular endothelial growth factor, HILPDA, and other genes whose protein products increase oxygen delivery or facilitate metabolic adaptation to hypoxia. Plays an essential role in embryonic vascularization, tumor angiogenesis and pathophysiology of ischemic disease. The protein is Hypoxia-inducible factor 1-alpha (hif1a) of Oncorhynchus mykiss (Rainbow trout).